A 275-amino-acid chain; its full sequence is Large ribosomal subunit protein uL2c (275 aa).

Disordered stretches follow at residues 36–56 (KNHR…HRGK) and 224–275 (VMNP…RKRK). The span at 255–275 (LGRKTRKKPKYSNRYILRKRK) shows a compositional bias: basic residues.

Belongs to the universal ribosomal protein uL2 family. As to quaternary structure, part of the 50S ribosomal subunit.

Its subcellular location is the plastid. It localises to the chloroplast. This Gracilaria tenuistipitata var. liui (Red alga) protein is Large ribosomal subunit protein uL2c (rpl2).